Consider the following 321-residue polypeptide: Major immediate early protein (321 aa).

The segment at 86 to 139 (CSVCLETYSQQSNDTCPFLIPTTCDHGFCFKCVINLQSNAMNIPHSTVCCPLCN) adopts an RING-type zinc-finger fold. Positions 228-249 (LIEENTRLNEQIQELQHQVRTL) are leucine-zipper.

It is found in the host nucleus. Functionally, plays some regulatory role in both viral DNA replication and transcriptional transactivation. The chain is Major immediate early protein (PE38) from Lepidoptera (butterflies and moths).